A 138-amino-acid polypeptide reads, in one-letter code: Putative pre-16S rRNA nuclease (138 aa).

The protein belongs to the YqgF nuclease family.

It localises to the cytoplasm. Functionally, could be a nuclease involved in processing of the 5'-end of pre-16S rRNA. This Mycoplasma genitalium (strain ATCC 33530 / DSM 19775 / NCTC 10195 / G37) (Mycoplasmoides genitalium) protein is Putative pre-16S rRNA nuclease.